Here is a 404-residue protein sequence, read N- to C-terminus: Ammonium transporter (404 aa).

9 consecutive transmembrane segments (helical) span residues 7–27 (VFMF…ALFY), 44–64 (FSSI…LAFA), 96–116 (LFMM…SGAF), 125–145 (FLLF…HWVW), 158–178 (FAGG…LAIV), 227–247 (INTN…EWII), 254–274 (LGAV…AGFV), 277–297 (FASI…VFSL), and 352–372 (IVAI…IIKI).

Belongs to the ammonia transporter channel (TC 1.A.11.2) family. As to quaternary structure, interacts with NrgB for a correct localization of the latter. GlnK-AmtB complex interacts with TnrA.

It localises to the cell membrane. Functions as an ammonium and methylammonium transporter in the absence of glutamine. Required for ammonium utilization at low concentrations or at low pH values, when ammonium is the single nitrogen source. Required for binding of NrgB to the membrane. Interaction between GlnK-AmtB complex and TnrA protects TnrA from proteolytic degradation. This Bacillus subtilis (strain 168) protein is Ammonium transporter.